The following is a 1165-amino-acid chain: Tectonin beta-propeller repeat-containing protein 1 (1165 aa).

TECPR repeat units lie at residues 209–240 (LSVWAVSLQGKVWYREDVSHSNPEGSSWSLLD), 254–285 (DLLWATLWEGQALVREGINRSNPKGSSWSIVE), 301–332 (SVVWAVTKDWKVWFRRGVNSHNPCGTSWIEMV), and 344–376 (DQVWGIGCEDRAVYFRQGVTPSELSGKTWKAII). 5 positions are modified to phosphoserine: S386, S388, S391, S412, and S417. A disordered region spans residues 404-486 (RGSGESAPSD…GPAPTPAELP (83 aa)). The PH domain occupies 611-717 (KTGALQWWCD…WLALLSLSCC (107 aa)). The stretch at 729-756 (QAIWSITCKGDIFVSEPSPDLEAHEHPL) is one TECPR 5 repeat. S938 and S949 each carry phosphoserine. TECPR repeat units follow at residues 953 to 984 (IALWAVSDKGDVLCRLGVSELNPAGSSWLHVG), 998 to 1029 (YQVWAVARDGSAFYRGSVYPSQPAGDCWYHIP), 1044 to 1075 (TSVYALDENGNLWYRQGITPSYPQGSSWEHVS), and 1087 to 1127 (DQVW…DYGI). Residues 1140–1165 (ATRAPRSSSQEQEPSAPPEAHGPVCC) are disordered. The segment covering 1143–1153 (APRSSSQEQEP) has biased composition (low complexity).

Belongs to the TECPR1 family. Interacts with ATG5; the interaction is direct. Interacts with WIPI2. Interacts with the ATG5-ATG12 conjugate, the interaction is however mutually exclusive with ATG16, since it does not interact with ATG12-ATG5-ATG16 complex.

The protein resides in the cytoplasmic vesicle. The protein localises to the autophagosome membrane. Its subcellular location is the lysosome membrane. Functionally, tethering factor involved in autophagy. Involved in autophagosome maturation by promoting the autophagosome fusion with lysosomes: acts by associating with both the ATG5-ATG12 conjugate and phosphatidylinositol-3-phosphate (PtdIns(3)P) present at the surface of autophagosomes. Also involved in selective autophagy against bacterial pathogens, by being required for phagophore/preautophagosomal structure biogenesis and maturation. The chain is Tectonin beta-propeller repeat-containing protein 1 (TECPR1) from Homo sapiens (Human).